A 395-amino-acid polypeptide reads, in one-letter code: Probable hercynylcysteine sulfoxide lyase (395 aa).

The segment at 1-21 (MQDEAMRRSGANSPAGDSLAD) is disordered. Lys220 is subject to N6-(pyridoxal phosphate)lysine.

It belongs to the class-V pyridoxal-phosphate-dependent aminotransferase family. EgtE subfamily. Pyridoxal 5'-phosphate serves as cofactor.

It carries out the reaction S-(hercyn-2-yl)-L-cysteine S-oxide + AH2 + H(+) = ergothioneine + pyruvate + A + NH4(+). It functions in the pathway amino-acid biosynthesis; ergothioneine biosynthesis. In terms of biological role, probably catalyzes the conversion of hercynylcysteine sulfoxide to ergothioneine. ERG is one of the major redox buffers which protects bacteria against redox stressors and antibiotics; loss of ERG or mycothiol (MSH, the other major redox buffer in this bacteria) leads to respiratory alterations and bioenergetic deficiencies that negatively impact virulence. This chain is Probable hercynylcysteine sulfoxide lyase, found in Mycobacterium tuberculosis (strain CDC 1551 / Oshkosh).